Consider the following 465-residue polypeptide: 3-isopropylmalate dehydratase large subunit (465 aa).

Residues C347, C407, and C410 each contribute to the [4Fe-4S] cluster site. Positions 417–443 are disordered; sequence TLKPGERSASTSNRNFEGRQGKGGRTH.

Belongs to the aconitase/IPM isomerase family. LeuC type 1 subfamily. Heterodimer of LeuC and LeuD. It depends on [4Fe-4S] cluster as a cofactor.

It carries out the reaction (2R,3S)-3-isopropylmalate = (2S)-2-isopropylmalate. It participates in amino-acid biosynthesis; L-leucine biosynthesis; L-leucine from 3-methyl-2-oxobutanoate: step 2/4. In terms of biological role, catalyzes the isomerization between 2-isopropylmalate and 3-isopropylmalate, via the formation of 2-isopropylmaleate. This Thermobifida fusca (strain YX) protein is 3-isopropylmalate dehydratase large subunit.